Reading from the N-terminus, the 332-residue chain is Holliday junction branch migration complex subunit RuvB (332 aa).

A large ATPase domain (RuvB-L) region spans residues 1–181 (MARILDNDVM…FGITGHMEYY (181 aa)). ATP is bound by residues Leu-20, Arg-21, Gly-62, Lys-65, Thr-66, Thr-67, 128 to 130 (EDF), Arg-171, Tyr-181, and Arg-218. Thr-66 contributes to the Mg(2+) binding site. The interval 182 to 252 (QEKDLTEIVE…ITDRALTMLD (71 aa)) is small ATPAse domain (RuvB-S). The segment at 255-332 (REGLDYIDQK…RHLGYPYQNT (78 aa)) is head domain (RuvB-H). The DNA site is built by Arg-291, Arg-310, Arg-312, and Arg-315.

This sequence belongs to the RuvB family. As to quaternary structure, homohexamer. Forms an RuvA(8)-RuvB(12)-Holliday junction (HJ) complex. HJ DNA is sandwiched between 2 RuvA tetramers; dsDNA enters through RuvA and exits via RuvB. An RuvB hexamer assembles on each DNA strand where it exits the tetramer. Each RuvB hexamer is contacted by two RuvA subunits (via domain III) on 2 adjacent RuvB subunits; this complex drives branch migration. In the full resolvosome a probable DNA-RuvA(4)-RuvB(12)-RuvC(2) complex forms which resolves the HJ.

It is found in the cytoplasm. It catalyses the reaction ATP + H2O = ADP + phosphate + H(+). Functionally, the RuvA-RuvB-RuvC complex processes Holliday junction (HJ) DNA during genetic recombination and DNA repair, while the RuvA-RuvB complex plays an important role in the rescue of blocked DNA replication forks via replication fork reversal (RFR). RuvA specifically binds to HJ cruciform DNA, conferring on it an open structure. The RuvB hexamer acts as an ATP-dependent pump, pulling dsDNA into and through the RuvAB complex. RuvB forms 2 homohexamers on either side of HJ DNA bound by 1 or 2 RuvA tetramers; 4 subunits per hexamer contact DNA at a time. Coordinated motions by a converter formed by DNA-disengaged RuvB subunits stimulates ATP hydrolysis and nucleotide exchange. Immobilization of the converter enables RuvB to convert the ATP-contained energy into a lever motion, pulling 2 nucleotides of DNA out of the RuvA tetramer per ATP hydrolyzed, thus driving DNA branch migration. The RuvB motors rotate together with the DNA substrate, which together with the progressing nucleotide cycle form the mechanistic basis for DNA recombination by continuous HJ branch migration. Branch migration allows RuvC to scan DNA until it finds its consensus sequence, where it cleaves and resolves cruciform DNA. The polypeptide is Holliday junction branch migration complex subunit RuvB (Streptococcus pyogenes serotype M12 (strain MGAS9429)).